The following is a 239-amino-acid chain: MKNDVISPEFDENGRPLRRIRSFVRRQGRLTKGQEHALENYWPVMGVEFSEDMLDFPALFGREAPVTLEIGFGMGASLVAMAKDRPEQDFLGIEVHSPGVGACLSSAHEEGLSNLRVMCHDAVEVLHKMIPDNSLRMVQLFFPDPWHKARHNKRRIVQVPFAELVKSKLQLGGIFHMATDWEPYAEHMLEVMSSIDGYKNLSESNDYVPRPASRPVTKFEQRGHRLGHGVWDLMFERVK.

S-adenosyl-L-methionine-binding residues include E69, E94, D121, and D144. D144 is a catalytic residue. K148 serves as a coordination point for substrate. The interval 150-155 (RHNKRR) is interaction with RNA. Residues D180 and 217-220 (TKFE) each bind substrate.

The protein belongs to the class I-like SAM-binding methyltransferase superfamily. TrmB family. In terms of assembly, monomer.

The catalysed reaction is guanosine(46) in tRNA + S-adenosyl-L-methionine = N(7)-methylguanosine(46) in tRNA + S-adenosyl-L-homocysteine. The protein operates within tRNA modification; N(7)-methylguanine-tRNA biosynthesis. Functionally, catalyzes the formation of N(7)-methylguanine at position 46 (m7G46) in tRNA. The chain is tRNA (guanine-N(7)-)-methyltransferase from Escherichia coli O6:H1 (strain CFT073 / ATCC 700928 / UPEC).